A 419-amino-acid polypeptide reads, in one-letter code: Serine hydroxymethyltransferase (419 aa).

Residues L121 and 125-127 (GHL) contribute to the (6S)-5,6,7,8-tetrahydrofolate site. The residue at position 229 (K229) is an N6-(pyridoxal phosphate)lysine.

It belongs to the SHMT family. In terms of assembly, homodimer. Pyridoxal 5'-phosphate serves as cofactor.

Its subcellular location is the cytoplasm. It carries out the reaction (6R)-5,10-methylene-5,6,7,8-tetrahydrofolate + glycine + H2O = (6S)-5,6,7,8-tetrahydrofolate + L-serine. It functions in the pathway one-carbon metabolism; tetrahydrofolate interconversion. Its pathway is amino-acid biosynthesis; glycine biosynthesis; glycine from L-serine: step 1/1. Its function is as follows. Catalyzes the reversible interconversion of serine and glycine with tetrahydrofolate (THF) serving as the one-carbon carrier. This reaction serves as the major source of one-carbon groups required for the biosynthesis of purines, thymidylate, methionine, and other important biomolecules. Also exhibits THF-independent aldolase activity toward beta-hydroxyamino acids, producing glycine and aldehydes, via a retro-aldol mechanism. In Histophilus somni (strain 2336) (Haemophilus somnus), this protein is Serine hydroxymethyltransferase.